Consider the following 585-residue polypeptide: Exonuclease V, mitochondrial (585 aa).

Residues 1 to 26 (MLGRALINKYGFLIHPRRFVHLNDKS) constitute a mitochondrion transit peptide. Residue Cys141 coordinates [4Fe-4S] cluster. Residues Asp270 and Asp320 each contribute to the Mg(2+) site. [4Fe-4S] cluster is bound by residues Cys549, Cys552, and Cys558.

Belongs to the EXO5 family. In terms of assembly, monomer. Mg(2+) serves as cofactor. It depends on [4Fe-4S] cluster as a cofactor.

The protein resides in the mitochondrion. In terms of biological role, single strand DNA specific 5' exonuclease involved in mitochondrial DNA replication and recombination. Releases dinucleotides as main products of catalysis. Has the capacity to slide across 5'double-stranded DNA or 5'RNA sequences and resumes cutting two nucleotides downstream of the double-stranded-to-single-stranded junction or RNA-to-DNA junction, respectively. The chain is Exonuclease V, mitochondrial (EXO5) from Saccharomyces cerevisiae (strain ATCC 204508 / S288c) (Baker's yeast).